We begin with the raw amino-acid sequence, 91 residues long: Small ribosomal subunit protein bS16c (91 aa).

This sequence belongs to the bacterial ribosomal protein bS16 family.

It is found in the plastid. The protein localises to the chloroplast. This is Small ribosomal subunit protein bS16c from Pelargonium hortorum (Common geranium).